The sequence spans 1052 residues: Ubiquitin-like modifier-activating enzyme 6 (1052 aa).

An N-acetylmethionine modification is found at Met-1. Positions 1–21 are disordered; it reads MEGSEPVAAHQGEEASCSSWG. Arg-46 provides a ligand contact to ATP. Thr-54 carries the phosphothreonine modification. At Ser-301 the chain carries Phosphoserine. Ala-470 and Asp-497 together coordinate ATP. Mg(2+) is bound by residues Asp-499 and Glu-502. Residues Asn-505, Arg-508, Gln-509, and Lys-521 each coordinate ATP. Residue Lys-544 is modified to N6-acetyllysine. Val-545 is an ATP binding site. Asp-569 contributes to the Mg(2+) binding site. Residue Asn-570 participates in ATP binding. Residue Cys-625 is the Glycyl thioester intermediate of the active site. Position 729 is an N6-acetyllysine (Lys-729). Ser-737 bears the Phosphoserine mark.

The protein belongs to the ubiquitin-activating E1 family. Forms a thioester with UBD in cells stimulated with tumor necrosis factor-alpha (TNFa) and interferon-gamma (IFNg). As to expression, widely expressed. Isoform 2 is predominantly expressed in testis with higher expression in adult testis than in fetal testis.

It catalyses the reaction ATP + ubiquitin + [E1 ubiquitin-activating enzyme]-L-cysteine = AMP + diphosphate + S-ubiquitinyl-[E1 ubiquitin-activating enzyme]-L-cysteine.. It participates in protein modification; protein ubiquitination. Activates ubiquitin by first adenylating its C-terminal glycine residue with ATP, and thereafter linking this residue to the side chain of a cysteine residue in E1, yielding a ubiquitin-E1 thioester and free AMP. Specific for ubiquitin, does not activate ubiquitin-like peptides. Also activates UBD/FAT10 conjugation via adenylation of its C-terminal glycine. Differs from UBE1 in its specificity for substrate E2 charging. Does not charge cell cycle E2s, such as CDC34. Essential for embryonic development. Isoform 2 may play a key role in ubiquitin system and may influence spermatogenesis and male fertility. This chain is Ubiquitin-like modifier-activating enzyme 6 (UBA6), found in Homo sapiens (Human).